The following is a 435-amino-acid chain: Antho-RFamide neuropeptides type 1 (435 aa).

The signal sequence occupies residues 1 to 22 (MTTVSYVTILLTVLVQVLTSDA). Positions 23–193 (KATNNKRELS…SVPGRYGREL (171 aa)) are excised as a propeptide. Residue Q194 is modified to Pyrrolidone carboxylic acid. At F197 the chain carries Phenylalanine amide. The propeptide occupies 199 to 201 (REL). The residue at position 205 (F205) is a Phenylalanine amide. Residues 207–209 (REA) constitute a propeptide that is removed on maturation. A Phenylalanine amide modification is found at F213. The propeptide occupies 215–217 (REL). F221 bears the Phenylalanine amide mark. Residues 223 to 225 (REF) constitute a propeptide that is removed on maturation. Residue F229 is modified to Phenylalanine amide. Basic and acidic residues predominate over residues 230–371 (GREDQGRFGR…EDIAEADQGR (142 aa)). Disordered stretches follow at residues 230 to 374 (GRED…RFGR) and 386 to 435 (AKKR…AKTS). Residues 231-233 (RED) constitute a propeptide that is removed on maturation. Residue F237 is modified to Phenylalanine amide. Residues 239–241 (RED) constitute a propeptide that is removed on maturation. F245 bears the Phenylalanine amide mark. Positions 247–249 (RED) are excised as a propeptide. F253 bears the Phenylalanine amide mark. A propeptide spanning residues 255-257 (RED) is cleaved from the precursor. A Phenylalanine amide modification is found at F261. The propeptide occupies 263-265 (RED). Phenylalanine amide is present on F269. Positions 271–273 (RED) are excised as a propeptide. At F277 the chain carries Phenylalanine amide. The propeptide occupies 279–281 (REL). Residue F285 is modified to Phenylalanine amide. The propeptide occupies 287 to 289 (REF). A Phenylalanine amide modification is found at F293. A propeptide spanning residues 295–297 (RED) is cleaved from the precursor. F301 carries the phenylalanine amide modification. Residues 303 to 305 (RED) constitute a propeptide that is removed on maturation. Phenylalanine amide is present on F309. The propeptide occupies 311 to 313 (REL). F317 is subject to Phenylalanine amide. A propeptide spanning residues 319–321 (RED) is cleaved from the precursor. F325 carries the post-translational modification Phenylalanine amide. Positions 327-329 (RED) are excised as a propeptide. F333 is modified (phenylalanine amide). Positions 335–342 (REDLAKED) are excised as a propeptide. At F346 the chain carries Phenylalanine amide. Residues 348–355 (REDLAKED) constitute a propeptide that is removed on maturation. The residue at position 359 (F359) is a Phenylalanine amide. A propeptide spanning residues 361–368 (REDIAEAD) is cleaved from the precursor. A Phenylalanine amide modification is found at F372. Positions 374 to 435 (RNAAAAAAAA…KSDDALAKTS (62 aa)) are excised as a propeptide. Positions 398-435 (SDPKPQTRFRDGKDMQEKRKVEKKDKIEKSDDALAKTS) are enriched in basic and acidic residues.

The protein belongs to the FARP (FMRFamide related peptide) family.

The protein resides in the secreted. Functionally, not known but it could act as a transmitter at neuromuscular synapses. The sequence is that of Antho-RFamide neuropeptides type 1 from Anthopleura elegantissima (Green aggregating anemone).